The primary structure comprises 278 residues: Putative B3 domain-containing protein At2g21920 (278 aa).

Positions 168-275 (ISKTLSRTDV…KFIILNFEYN (108 aa)) form a DNA-binding region, TF-B3.

It is found in the nucleus. In Arabidopsis thaliana (Mouse-ear cress), this protein is Putative B3 domain-containing protein At2g21920.